Reading from the N-terminus, the 267-residue chain is Alkaline ceramidase 3 (267 aa).

At 1-33 (MAPAADREGYWGPTTSTLDWCEENYSVTWYIAE) the chain is on the cytoplasmic side. Residues Asp19, Trp20, Glu22, Asn24, and Glu33 each coordinate Ca(2+). The helical transmembrane segment at 34-55 (FWNTVSNLIMIIPPMFGAVQSV) threads the bilayer. Over 56-61 (RDGLEK) the chain is Lumenal. Residues 62–82 (RYIASYLALTVVGMGSWCFHM) form a helical membrane-spanning segment. Zn(2+) is bound at residue His81. Residues 83–87 (TLKYE) lie on the Cytoplasmic side of the membrane. Residues 88-108 (MQLLDELPMIYSCCIFVYCMF) traverse the membrane as a helical segment. Residues 109–118 (ECFKIKNSVN) lie on the Lumenal side of the membrane. The chain crosses the membrane as a helical span at residues 119-139 (YHLLFTLVLFSLIVTTVYLKV). The Cytoplasmic portion of the chain corresponds to 140-141 (KE). The chain crosses the membrane as a helical span at residues 142-162 (PIFHQVMYGMLVFTLVLRSIY). The Lumenal segment spans residues 163–173 (IVTWVYPWLRG). A helical transmembrane segment spans residues 174 to 194 (LGYTSLGIFLLGFLFWNIDNI). The Cytoplasmic segment spans residues 195-215 (FCESLRNFRKKVPPIIGITTQ). Residues 216-236 (FHAWWHILTGLGSYLHILFSL) traverse the membrane as a helical segment. 2 residues coordinate Zn(2+): His217 and His221. The Lumenal portion of the chain corresponds to 237–267 (YTRTLYLRYRPKVKFLFGIWPVILFEPLRKH).

Belongs to the alkaline ceramidase family. Requires Zn(2+) as cofactor. Ubiquitously expressed. Highly expressed in placenta. Expressed in erythrocytes.

Its subcellular location is the endoplasmic reticulum membrane. The protein localises to the golgi apparatus membrane. The catalysed reaction is an N-acyl-(4R)-4-hydroxysphinganine + H2O = (4R)-hydroxysphinganine + a fatty acid. It carries out the reaction N-(5Z,8Z,11Z,14Z-eicosatetraenoyl)-sphing-4-enine + H2O = sphing-4-enine + (5Z,8Z,11Z,14Z)-eicosatetraenoate. The enzyme catalyses N-(5Z,8Z,11Z,14Z-eicosatetraenoyl)-sphinganine + H2O = sphinganine + (5Z,8Z,11Z,14Z)-eicosatetraenoate. It catalyses the reaction N-(5Z,8Z,11Z,14Z-eicosatetraenoyl)-(4R)-hydroxysphinganine + H2O = (4R)-hydroxysphinganine + (5Z,8Z,11Z,14Z)-eicosatetraenoate. The catalysed reaction is N-(11Z-eicosenoyl)-sphing-4-enine + H2O = (11Z)-eicosenoate + sphing-4-enine. It carries out the reaction N-(11Z-eicosenoyl)-sphinganine + H2O = (11Z)-eicosenoate + sphinganine. The enzyme catalyses N-(11Z-eicosenoyl)-(4R)-hydroxysphinganine + H2O = (11Z)-eicosenoate + (4R)-hydroxysphinganine. It catalyses the reaction N-(9Z-octadecenoyl)-sphing-4-enine + H2O = sphing-4-enine + (9Z)-octadecenoate. The catalysed reaction is N-(9Z-octadecenoyl)-sphinganine + H2O = sphinganine + (9Z)-octadecenoate. It carries out the reaction N-(9Z-octadecenoyl)-(4R)-hydroxysphinganine + H2O = (4R)-hydroxysphinganine + (9Z)-octadecenoate. The enzyme catalyses an N-acylsphing-4-enine + H2O = sphing-4-enine + a fatty acid. It catalyses the reaction an N-acylsphinganine + H2O = sphinganine + a fatty acid. It participates in lipid metabolism; sphingolipid metabolism. Its activity is regulated as follows. Activated by 5 mM Ca(2+) and inhibited by 5 mM Zn(2+). Its function is as follows. Endoplasmic reticulum and Golgi ceramidase that catalyzes the hydrolysis of unsaturated long-chain C18:1-, C20:1- and C20:4-ceramides, dihydroceramides and phytoceramides into sphingoid bases like sphingosine and free fatty acids at alkaline pH. Ceramides, sphingosine, and its phosphorylated form sphingosine-1-phosphate are bioactive lipids that mediate cellular signaling pathways regulating several biological processes including cell proliferation, apoptosis and differentiation. Controls the generation of sphingosine in erythrocytes, and thereby sphingosine-1-phosphate in plasma. Through the regulation of ceramides and sphingosine-1-phosphate homeostasis in the brain may play a role in neurons survival and function. By regulating the levels of pro-inflammatory ceramides in immune cells and tissues, may modulate the inflammatory response. The protein is Alkaline ceramidase 3 (ACER3) of Homo sapiens (Human).